The chain runs to 46 residues: Large ribosomal subunit protein bL36A (46 aa).

Belongs to the bacterial ribosomal protein bL36 family.

The sequence is that of Large ribosomal subunit protein bL36A from Sodalis glossinidius (strain morsitans).